We begin with the raw amino-acid sequence, 155 residues long: 6,7-dimethyl-8-ribityllumazine synthase (155 aa).

Residues Trp-22, 56–58, and 80–82 each bind 5-amino-6-(D-ribitylamino)uracil; these read SYE and AVI. 85 to 86 is a (2S)-2-hydroxy-3-oxobutyl phosphate binding site; the sequence is DT. His-88 (proton donor) is an active-site residue. Phe-113 contributes to the 5-amino-6-(D-ribitylamino)uracil binding site. Arg-127 contributes to the (2S)-2-hydroxy-3-oxobutyl phosphate binding site.

Belongs to the DMRL synthase family.

The enzyme catalyses (2S)-2-hydroxy-3-oxobutyl phosphate + 5-amino-6-(D-ribitylamino)uracil = 6,7-dimethyl-8-(1-D-ribityl)lumazine + phosphate + 2 H2O + H(+). It functions in the pathway cofactor biosynthesis; riboflavin biosynthesis; riboflavin from 2-hydroxy-3-oxobutyl phosphate and 5-amino-6-(D-ribitylamino)uracil: step 1/2. Functionally, catalyzes the formation of 6,7-dimethyl-8-ribityllumazine by condensation of 5-amino-6-(D-ribitylamino)uracil with 3,4-dihydroxy-2-butanone 4-phosphate. This is the penultimate step in the biosynthesis of riboflavin. This chain is 6,7-dimethyl-8-ribityllumazine synthase, found in Deinococcus radiodurans (strain ATCC 13939 / DSM 20539 / JCM 16871 / CCUG 27074 / LMG 4051 / NBRC 15346 / NCIMB 9279 / VKM B-1422 / R1).